The sequence spans 217 residues: Adenylate kinase (217 aa).

10 to 15 contacts ATP; the sequence is GAGKGT. The interval 30–59 is NMP; that stretch reads STGDLFRANISQQTELGKLAKSYMNAGNLV. Residues threonine 31, arginine 36, 57–59, 85–88, and glutamine 92 contribute to the AMP site; these read NLV and GFPR. The interval 126-164 is LID; it reads GRRVCRNEPKHVFHVTYTPPKKEGVCDVCGGELYQRDDD. ATP-binding positions include arginine 127 and 137 to 138; that span reads VF. Arginine 161 and arginine 172 together coordinate AMP. An ATP-binding site is contributed by glycine 200.

It belongs to the adenylate kinase family. In terms of assembly, monomer.

The protein localises to the cytoplasm. It carries out the reaction AMP + ATP = 2 ADP. The protein operates within purine metabolism; AMP biosynthesis via salvage pathway; AMP from ADP: step 1/1. Its function is as follows. Catalyzes the reversible transfer of the terminal phosphate group between ATP and AMP. Plays an important role in cellular energy homeostasis and in adenine nucleotide metabolism. This is Adenylate kinase from Streptomyces coelicolor (strain ATCC BAA-471 / A3(2) / M145).